The following is an 88-amino-acid chain: Small ribosomal subunit protein bS20 (88 aa).

The protein belongs to the bacterial ribosomal protein bS20 family.

Binds directly to 16S ribosomal RNA. This Rhodopseudomonas palustris (strain BisA53) protein is Small ribosomal subunit protein bS20.